A 132-amino-acid polypeptide reads, in one-letter code: Small ribosomal subunit protein uS8 (132 aa).

It belongs to the universal ribosomal protein uS8 family. As to quaternary structure, part of the 30S ribosomal subunit. Contacts proteins S5 and S12.

In terms of biological role, one of the primary rRNA binding proteins, it binds directly to 16S rRNA central domain where it helps coordinate assembly of the platform of the 30S subunit. The protein is Small ribosomal subunit protein uS8 of Francisella tularensis subsp. holarctica (strain FTNF002-00 / FTA).